Consider the following 62-residue polypeptide: MIIDIEIWIQLFFFNNYNNYNNNNNNNNNNNNNNNNNNNNNNNNNNNNNNNNNNNNNNKNNN.

The interval 17-62 is disordered; that stretch reads YNNYNNNNNNNNNNNNNNNNNNNNNNNNNNNNNNNNNNNNNNKNNN.

This is an uncharacterized protein from Dictyostelium discoideum (Social amoeba).